A 348-amino-acid polypeptide reads, in one-letter code: MNGTEGPNFYVPFSNKTGVVRSPFEYPQYYLAEPWQFSMLAAYMFLLIVLGFPINFLTLYVTVQHKKLRTPLNYILLNLAVADLFMVFGGFTTTLYTSLHGYFVFGPTGCNVEGFFATLGGEIALWSLVVLAIERYVVVCKPMSNFRFGENHAIMGVAFTWVMALACAAPPLAGWSRYIPEGMQCSCGIDYYTLKPEVNNESFVIYMFVVHFTIPMIVIFFCYGQLVFTVKEAAAQQQESATTQKAEKEVTRMVIIMVIAFLICWVPYASVAFYIFTHQGSNFGPIFMTLPAFFAKSASIYNPVIYIMMNKQFRNCMLTTICCGKNPFAEEEGATTVSKTETSQVAPA.

The residue at position 1 (Met-1) is an N-acetylmethionine. Topologically, residues Met-1–Gln-36 are extracellular. 2 N-linked (GlcNAc...) asparagine glycosylation sites follow: Asn-2 and Asn-15. Residues Phe-37–Val-61 form a helical membrane-spanning segment. The Cytoplasmic portion of the chain corresponds to Thr-62 to Asn-73. Residues Tyr-74–Tyr-96 traverse the membrane as a helical segment. The Extracellular segment spans residues Thr-97–Cys-110. Cys-110 and Cys-187 are oxidised to a cystine. The chain crosses the membrane as a helical span at residues Asn-111–Ile-133. Residues Glu-134–Tyr-136 carry the 'Ionic lock' involved in activated form stabilization motif. At Glu-134–His-152 the chain is on the cytoplasmic side. The chain crosses the membrane as a helical span at residues Ala-153–Ala-173. Residues Gly-174–Ser-202 lie on the Extracellular side of the membrane. A Zn(2+)-binding site is contributed by Glu-201. The helical transmembrane segment at Phe-203–Gly-224 threads the bilayer. The Cytoplasmic segment spans residues Gln-225–Arg-252. A helical transmembrane segment spans residues Met-253–Tyr-274. At Ile-275–Ile-286 the chain is on the extracellular side. Gln-279 lines the Zn(2+) pocket. Residues Phe-287 to Met-308 form a helical membrane-spanning segment. Lys-296 is modified (N6-(retinylidene)lysine). Over Met-309–Ala-348 the chain is Cytoplasmic. Residues Cys-322 and Cys-323 are each lipidated (S-palmitoyl cysteine). Positions Glu-330–Ala-348 are interaction with SAG. A phosphothreonine mark is found at Thr-335 and Thr-336. Ser-338 bears the Phosphoserine mark. A phosphothreonine mark is found at Thr-340 and Thr-342. At Ser-343 the chain carries Phosphoserine.

Belongs to the G-protein coupled receptor 1 family. Opsin subfamily. As to quaternary structure, homodimer. May form a complex composed of RHO, GRK1 and RCVRN in a Ca(2+)-dependent manner; RCVRN prevents the interaction between GRK1 and RHO. Interacts with GRK1. Interacts (phosphorylated form) with SAG. Interacts with GNAT1. Interacts with GNAT3. SAG and G-proteins compete for a common binding site. Interacts with PRCD; the interaction promotes PRCD stability. Forms a complex with ASAP1 and ARF4. Forms a complex with ASAP1, RAB11A, Rabin8/RAB3IP, ARF4 and RAB11FIP3; the complex regulates Golgi-to-cilia rhodopsin/RHO transport in photoreceptors. Post-translationally, phosphorylated on some or all of the serine and threonine residues present in the C-terminal region. Contains one covalently linked retinal chromophore. Upon light absorption, the covalently bound 11-cis-retinal is converted to all-trans-retinal. After hydrolysis of the Schiff base and release of the covalently bound all-trans-retinal, active rhodopsin is regenerated by binding of a fresh molecule of 11-cis-retinal.

It is found in the membrane. The protein resides in the cell projection. Its subcellular location is the cilium. It localises to the photoreceptor outer segment. Photoreceptor required for image-forming vision at low light intensity. Required for photoreceptor cell viability after birth. Light-induced isomerization of 11-cis to all-trans retinal triggers a conformational change that activates signaling via G-proteins. Subsequent receptor phosphorylation mediates displacement of the bound G-protein alpha subunit by the arrestin SAG and terminates signaling. The sequence is that of Rhodopsin (RHO) from Trichechus manatus (Caribbean manatee).